Reading from the N-terminus, the 95-residue chain is ESAT-6-like protein EsxC (95 aa).

Belongs to the WXG100 family. ESAT-6 subfamily.

The protein resides in the secreted. The polypeptide is ESAT-6-like protein EsxC (Mycobacterium tuberculosis (strain CDC 1551 / Oshkosh)).